The primary structure comprises 262 residues: 5'-nucleotidase SurE (262 aa).

4 residues coordinate a divalent metal cation: D11, D12, S43, and N101.

The protein belongs to the SurE nucleotidase family. Requires a divalent metal cation as cofactor.

The protein resides in the cytoplasm. It catalyses the reaction a ribonucleoside 5'-phosphate + H2O = a ribonucleoside + phosphate. Functionally, nucleotidase that shows phosphatase activity on nucleoside 5'-monophosphates. This Prochlorococcus marinus (strain NATL1A) protein is 5'-nucleotidase SurE.